Reading from the N-terminus, the 310-residue chain is Pantothenate kinase (310 aa).

Residue 95-102 coordinates ATP; that stretch reads GSVAVGKS.

Belongs to the prokaryotic pantothenate kinase family.

It localises to the cytoplasm. The catalysed reaction is (R)-pantothenate + ATP = (R)-4'-phosphopantothenate + ADP + H(+). It functions in the pathway cofactor biosynthesis; coenzyme A biosynthesis; CoA from (R)-pantothenate: step 1/5. In Rhodococcus opacus (strain B4), this protein is Pantothenate kinase.